The following is a 278-amino-acid chain: MDVRQSIHSEHAKTLDTQALRREFLIENIFVADEYTMVYSHIDRIIVGGIMPVSHPVEIGGEVGKQLGVSRLLDRRELGVINIGGAGAIIVDGQRHDIGHRDALYIGKGAKELVFVSNEASRPAKFYYNCAPAHTAYPTKKVSPADVAPVTLGDNLTSNRRTINKYFVPDVLETCQLSMGLTELAPGNLWNTMPCHTHERRMEVYLYFNMEEDSCVFHMMGQPQETRHIVMRNEQAVISPSWSIHSGVGTKAYTFIWGMVGENQVFDDMDHVAVQDLR.

Positions 196, 198, 203, and 245 each coordinate Zn(2+).

It belongs to the KduI family. Requires Zn(2+) as cofactor.

It carries out the reaction 5-dehydro-4-deoxy-D-glucuronate = 3-deoxy-D-glycero-2,5-hexodiulosonate. It participates in glycan metabolism; pectin degradation; 2-dehydro-3-deoxy-D-gluconate from pectin: step 4/5. Catalyzes the isomerization of 5-dehydro-4-deoxy-D-glucuronate to 3-deoxy-D-glycero-2,5-hexodiulosonate. The polypeptide is 4-deoxy-L-threo-5-hexosulose-uronate ketol-isomerase (Salmonella agona (strain SL483)).